We begin with the raw amino-acid sequence, 110 residues long: MEARAIAKFVRIAPRKVKIVVDLVRGKQVDEALAILKHTPKGASPVVIKLIQSAVANAENNHEMDREQLFVSEVYANQGPTMKRFRPRAMGRATTIRKRTSHIGIVVKEK.

Belongs to the universal ribosomal protein uL22 family. Part of the 50S ribosomal subunit.

In terms of biological role, this protein binds specifically to 23S rRNA; its binding is stimulated by other ribosomal proteins, e.g. L4, L17, and L20. It is important during the early stages of 50S assembly. It makes multiple contacts with different domains of the 23S rRNA in the assembled 50S subunit and ribosome. The globular domain of the protein is located near the polypeptide exit tunnel on the outside of the subunit, while an extended beta-hairpin is found that lines the wall of the exit tunnel in the center of the 70S ribosome. The sequence is that of Large ribosomal subunit protein uL22 from Alkaliphilus metalliredigens (strain QYMF).